A 227-amino-acid polypeptide reads, in one-letter code: Urease accessory protein UreF (227 aa).

It belongs to the UreF family. In terms of assembly, ureD, UreF and UreG form a complex that acts as a GTP-hydrolysis-dependent molecular chaperone, activating the urease apoprotein by helping to assemble the nickel containing metallocenter of UreC. The UreE protein probably delivers the nickel.

The protein resides in the cytoplasm. Functionally, required for maturation of urease via the functional incorporation of the urease nickel metallocenter. In Actinobacillus pleuropneumoniae (Haemophilus pleuropneumoniae), this protein is Urease accessory protein UreF.